We begin with the raw amino-acid sequence, 160 residues long: Deoxyuridine 5'-triphosphate nucleotidohydrolase (160 aa).

Substrate is bound by residues 79 to 81 (RSG), Asn-92, 96 to 98 (TVD), and Lys-106.

This sequence belongs to the dUTPase family. The cofactor is Mg(2+).

It carries out the reaction dUTP + H2O = dUMP + diphosphate + H(+). The protein operates within pyrimidine metabolism; dUMP biosynthesis; dUMP from dCTP (dUTP route): step 2/2. This enzyme is involved in nucleotide metabolism: it produces dUMP, the immediate precursor of thymidine nucleotides and it decreases the intracellular concentration of dUTP so that uracil cannot be incorporated into DNA. This is Deoxyuridine 5'-triphosphate nucleotidohydrolase from Sinorhizobium medicae (strain WSM419) (Ensifer medicae).